The primary structure comprises 3371 residues: Abnormal spindle-like microcephaly-associated protein homolog (3371 aa).

5 positions are modified to phosphoserine: S212, S215, S300, S325, and S540. The disordered stretch occupies residues 536-559; the sequence is RPHFSPVESKTSTVKHTKKVVTSS. The Calponin-homology (CH) 1 domain maps to 852 to 988; sequence KASKEILLAF…LLWKIALAFQ (137 aa). The stretch at 989–1014 forms a coiled coil; it reads VDISLNLDQLKEEIDFLKNTQSMKKT. Residue S1035 is modified to Phosphoserine. The 152-residue stretch at 1042–1193 folds into the Calponin-homology (CH) 2 domain; it reads SESVKLLMDW…YLSFLCARLL (152 aa). IQ domains lie at 1198 to 1227, 1396 to 1427, 1469 to 1500, 1564 to 1593, 1587 to 1616, 1610 to 1639, 1644 to 1673, 1667 to 1698, 1717 to 1746, 1740 to 1769, 1790 to 1819, 1813 to 1844, 1863 to 1894, 1886 to 1917, 1936 to 1965, 1959 to 1990, 2009 to 2040, 2032 to 2063, 2082 to 2113, 2105 to 2134, 2155 to 2186, 2227 to 2258, 2250 to 2281, 2300 to 2331, 2323 to 2354, 2396 to 2427, 2446 to 2477, 2539 to 2570, 2580 to 2609, 2603 to 2634, 2653 to 2682, 2729 to 2760, 2751 to 2780, 2824 to 2853, 2847 to 2878, 2869 to 2900, 2944 to 2973, 2994 to 3025, 3096 to 3125, and 3119 to 3150; these read ETRAARLIQTTWRQYKLKKDLKHHQERDKA, EERAAVVIQSWYRMHRELRKYIHLRSCVIIIQ, KRAAAIRLQAAFRGRRARNLCRQIKAACVLQS, TRSAVIVLQSACRRMQARKKFLHILTSIVK, ILTSIVKIQSYYRAYASRRKFLRLKKATVK, LKKATVKLQSIVRMKLARKQYLHLRAIAQQ, RRASCIKLQAFLRGYLVRKQVRLQRKAAVS, QRKAAVSLQSYFRMRKMRLDYLKVCHAAVVIQ, VRRAVTYLQATYRGYKVRRQLQQQSAAALK, QSAAALKIQAAFRGYRQRTKYQSVLQSALK, TRTAAISLQSAYRGWKVRKQMRKEHEAAVK, EHEAAVKIQSAFRTARAQKEFRVLKTAASVIQ, LRRAAVMLQSAWRGRAARRRIQKQQRCAIIIQ, QQRCAIIIQAYYRRHVQQKRWEIMKKAAHLIQ, TKXAAIILQSAFRGVRVRKKVKEMHQAAAT, MHQAAATIQSRYRAYQARKKYASYRAAAVIIQ, VKKAALKIQAVYRGVRARRHIRRMHMAATLIK, MHMAATLIKAAFKMQQSRRRYQQMRTAAIIIQ, ILKAVALLQAALRGARVRQSLRRMRTAATLIQ, MRTAATLIQAHYRGRRQQAYFNKLKKVTKT, LRRSAICIQAAFRGMRARRRLKAMHSAAAVIQ, LQKAAIKIQSWYRGWMVRKKIQEMRRAATVLQ, MRRAATVLQAAFRRHRTRARYQAWRCASQVIQ, QRHSALVLQAAFRGMRVRRRLKRMHASATLIQ, MHASATLIQSRFRSIMMRKRFLSLKKAAVFVQ, MHRAAALIQASFRMHRARLAFQTWKHAAVLIQ, WRHSAVVIQAAYKGLKARQLLREKHRAAVIIQ, RHQAAITIQEHFRAFKTRKHYLHFRAKVVFVQ, RTQAVICIQSCFRGFKARRGIQRMHLAATR, MHLAATRIQSCYRRHRARADYQAKKRAVVVIQ, IQKSARTIQAAFRGMKVRQKLKTMPDKKMA, QRKAAVTIQKAFRKMVTRRLEKQRRAAVRIQS, QRRAAVRIQSFLQMAVYRRRFLQQKRAALT, IRSSVIIIQARVKGFIQKRKFRELKDSTIK, LKDSTIKIQAVWRRHKARKYLREVKAACRIQA, EVKAACRIQAWYRCWKARREYLAVLRAVRIIQ, RHQAACLIQANFRGYKARQAFLQQKSAALT, LKKSTVVLQALVRGWLVRKRISEQRAKIRLLH, HSRAASVIQRAVRRFLLRKKQENFNKRIAK, and FNKRIAKIQALWRGYSWRKKNDSTKTKAIRQR.

It localises to the cytoplasm. It is found in the cytoskeleton. The protein resides in the spindle. The protein localises to the nucleus. Probable role in mitotic spindle regulation and coordination of mitotic processes. May have a preferential role in regulating neurogenesis. The polypeptide is Abnormal spindle-like microcephaly-associated protein homolog (ASPM) (Bos taurus (Bovine)).